Reading from the N-terminus, the 264-residue chain is S-adenosylmethionine decarboxylase proenzyme (264 aa).

The Schiff-base intermediate with substrate; via pyruvic acid role is filled by S112. At S112 the chain carries Pyruvic acid (Ser); by autocatalysis. The active-site Proton acceptor; for processing activity is H117. Residue C140 is the Proton donor; for catalytic activity of the active site.

This sequence belongs to the prokaryotic AdoMetDC family. Type 2 subfamily. Heterooctamer of four alpha and four beta chains arranged as a tetramer of alpha/beta heterodimers. Pyruvate is required as a cofactor. Is synthesized initially as an inactive proenzyme. Formation of the active enzyme involves a self-maturation process in which the active site pyruvoyl group is generated from an internal serine residue via an autocatalytic post-translational modification. Two non-identical subunits are generated from the proenzyme in this reaction, and the pyruvate is formed at the N-terminus of the alpha chain, which is derived from the carboxyl end of the proenzyme. The post-translation cleavage follows an unusual pathway, termed non-hydrolytic serinolysis, in which the side chain hydroxyl group of the serine supplies its oxygen atom to form the C-terminus of the beta chain, while the remainder of the serine residue undergoes an oxidative deamination to produce ammonia and the pyruvoyl group blocking the N-terminus of the alpha chain.

It catalyses the reaction S-adenosyl-L-methionine + H(+) = S-adenosyl 3-(methylsulfanyl)propylamine + CO2. It functions in the pathway amine and polyamine biosynthesis; S-adenosylmethioninamine biosynthesis; S-adenosylmethioninamine from S-adenosyl-L-methionine: step 1/1. Its function is as follows. Catalyzes the decarboxylation of S-adenosylmethionine to S-adenosylmethioninamine (dcAdoMet), the propylamine donor required for the synthesis of the polyamines spermine and spermidine from the diamine putrescine. The chain is S-adenosylmethionine decarboxylase proenzyme from Escherichia coli O127:H6 (strain E2348/69 / EPEC).